We begin with the raw amino-acid sequence, 312 residues long: tRNA-cytidine(32) 2-sulfurtransferase (312 aa).

Residues 47 to 52 (SGGKDS) carry the PP-loop motif motif. The [4Fe-4S] cluster site is built by Cys-122, Cys-125, and Cys-213.

The protein belongs to the TtcA family. As to quaternary structure, homodimer. Requires Mg(2+) as cofactor. It depends on [4Fe-4S] cluster as a cofactor.

It is found in the cytoplasm. The catalysed reaction is cytidine(32) in tRNA + S-sulfanyl-L-cysteinyl-[cysteine desulfurase] + AH2 + ATP = 2-thiocytidine(32) in tRNA + L-cysteinyl-[cysteine desulfurase] + A + AMP + diphosphate + H(+). It participates in tRNA modification. Catalyzes the ATP-dependent 2-thiolation of cytidine in position 32 of tRNA, to form 2-thiocytidine (s(2)C32). The sulfur atoms are provided by the cysteine/cysteine desulfurase (IscS) system. In Actinobacillus succinogenes (strain ATCC 55618 / DSM 22257 / CCUG 43843 / 130Z), this protein is tRNA-cytidine(32) 2-sulfurtransferase.